We begin with the raw amino-acid sequence, 109 residues long: Putative membrane protein insertion efficiency factor (109 aa).

The protein belongs to the UPF0161 family.

It is found in the cell inner membrane. Could be involved in insertion of integral membrane proteins into the membrane. The sequence is that of Putative membrane protein insertion efficiency factor from Rhodopseudomonas palustris (strain BisB18).